The following is a 402-amino-acid chain: Zinc finger protein 322 (402 aa).

The segment at 43 to 65 adopts a C2H2-type 1; atypical zinc-finger fold; sequence YQCLECKQNFCENLALIMCERTH. 8 consecutive C2H2-type zinc fingers follow at residues 71 to 93, 99 to 121, 127 to 149, 155 to 177, 183 to 205, 211 to 233, 239 to 261, and 267 to 289; these read YKCD…QRIH, YKCS…QRTH, YTCD…QRSH, YLCS…RRTH, FKCL…QRTH, YKCN…KRVH, YKCG…QRVH, and YKCL…QATH. The C2H2-type 10; degenerate zinc-finger motif lies at 293-315; that stretch reads FKCLEYEKSFNCSSDLIVHQRIH. The C2H2-type 11; degenerate zinc finger occupies 351–373; that stretch reads YKYTVCDKSFHQSSALLQHQTVH. Residue Ser391 is modified to Phosphoserine.

It belongs to the krueppel C2H2-type zinc-finger protein family. As to quaternary structure, interacts with POU5F1. As to expression, ubiquitous. Highly expressed in heart and skeletal muscle.

It localises to the cytoplasm. Its subcellular location is the nucleus. Its function is as follows. Transcriptional activator. Important for maintenance of pluripotency in embryonic stem cells. Binds directly to the POU5F1 distal enhancer and the NANOG proximal promoter, and enhances expression of both genes. Can also bind to numerous other gene promoters and regulates expression of many other pluripotency factors, either directly or indirectly. Promotes inhibition of MAPK signaling during embryonic stem cell differentiation. This is Zinc finger protein 322 (ZNF322) from Homo sapiens (Human).